The sequence spans 218 residues: ATP synthase subunit a (218 aa).

5 consecutive transmembrane segments (helical) span residues 17-37, 75-95, 104-124, 162-184, and 196-216; these read IYST…GIFL, YLPL…SWFI, DLST…IFGI, LFGN…PFLL, and GTIQ…NFVH.

This sequence belongs to the ATPase A chain family. In terms of assembly, F-type ATPases have 2 components, CF(1) - the catalytic core - and CF(0) - the membrane proton channel. CF(1) has five subunits: alpha(3), beta(3), gamma(1), delta(1), epsilon(1). CF(0) has three main subunits: a(1), b(2) and c(9-12). The alpha and beta chains form an alternating ring which encloses part of the gamma chain. CF(1) is attached to CF(0) by a central stalk formed by the gamma and epsilon chains, while a peripheral stalk is formed by the delta and b chains. In this bacterium the a and b subunits are transcribed but do not seem to be translated, thus the ATP synthase consists of the alpha, beta, gamma, delta, epsilon and c subunits.

Its subcellular location is the cell membrane. In terms of biological role, key component of the proton channel; it plays a direct role in the translocation of protons across the membrane. In Moorella thermoacetica (strain ATCC 39073 / JCM 9320), this protein is ATP synthase subunit a.